A 546-amino-acid chain; its full sequence is CTP synthase (546 aa).

The tract at residues 1–265 (MTKYIFVTGG…DDIIAEQLQL (265 aa)) is amidoligase domain. Serine 13 lines the CTP pocket. Serine 13 contacts UTP. Residues 14-19 (SLGKGI) and aspartate 71 each bind ATP. Aspartate 71 and glutamate 139 together coordinate Mg(2+). Residues 146–148 (DIE), 186–191 (KTKPTQ), and lysine 222 contribute to the CTP site. UTP is bound by residues 186–191 (KTKPTQ) and lysine 222. The 253-residue stretch at 290 to 542 (KIAMVGKYVD…VKAALAHQAD (253 aa)) folds into the Glutamine amidotransferase type-1 domain. Glycine 351 is a binding site for L-glutamine. Residue cysteine 378 is the Nucleophile; for glutamine hydrolysis of the active site. Residues 379-382 (LGMQ), glutamate 402, and arginine 469 each bind L-glutamine. Active-site residues include histidine 515 and glutamate 517.

The protein belongs to the CTP synthase family. Homotetramer.

It catalyses the reaction UTP + L-glutamine + ATP + H2O = CTP + L-glutamate + ADP + phosphate + 2 H(+). The catalysed reaction is L-glutamine + H2O = L-glutamate + NH4(+). It carries out the reaction UTP + NH4(+) + ATP = CTP + ADP + phosphate + 2 H(+). It participates in pyrimidine metabolism; CTP biosynthesis via de novo pathway; CTP from UDP: step 2/2. Allosterically activated by GTP, when glutamine is the substrate; GTP has no effect on the reaction when ammonia is the substrate. The allosteric effector GTP functions by stabilizing the protein conformation that binds the tetrahedral intermediate(s) formed during glutamine hydrolysis. Inhibited by the product CTP, via allosteric rather than competitive inhibition. In terms of biological role, catalyzes the ATP-dependent amination of UTP to CTP with either L-glutamine or ammonia as the source of nitrogen. Regulates intracellular CTP levels through interactions with the four ribonucleotide triphosphates. The sequence is that of CTP synthase from Chromobacterium violaceum (strain ATCC 12472 / DSM 30191 / JCM 1249 / CCUG 213 / NBRC 12614 / NCIMB 9131 / NCTC 9757 / MK).